The primary structure comprises 342 residues: Predicted GPI-anchored protein 54 (342 aa).

The first 16 residues, 1-16, serve as a signal peptide directing secretion; sequence MRANYLLLLAATAVQA. 3 N-linked (GlcNAc...) asparagine glycosylation sites follow: N25, N105, and N151. G314 carries GPI-anchor amidated glycine lipidation. The propeptide at 315–342 is removed in mature form; sequence ASQSHPISSYSNYTISDYAPPISSYYSL. N326 carries an N-linked (GlcNAc...) asparagine glycan.

It is found in the cell membrane. This Candida albicans (strain SC5314 / ATCC MYA-2876) (Yeast) protein is Predicted GPI-anchored protein 54 (PGA54).